Reading from the N-terminus, the 79-residue chain is Protein S100-G (79 aa).

Serine 2 carries the N-acetylserine modification. EF-hand domains are found at residues 13–48 and 45–79; these read IFEKYAAKEGDPNQLSKEELKLLLQTEFPSLLKGPS and KGPSTLDELFEELDKNGDGEVSFEEFQVLVKKISQ. Glutamine 26 and glutamate 31 together coordinate Ca(2+). A Phosphoserine modification is found at serine 42. Ca(2+) is bound by residues aspartate 58, asparagine 60, aspartate 62, glutamate 64, and glutamate 69.

It belongs to the S-100 family.

This is Protein S100-G (S100G) from Bos taurus (Bovine).